The sequence spans 300 residues: Protoheme IX farnesyltransferase (300 aa).

The next 9 helical transmembrane spans lie at 24–44 (VTQLAVFCAVIGMFLATPGMV), 48–68 (VLIGGTVGIWLLAGAAFAINC), 94–114 (PQILLFSAVLGSIGAWTLYTF), 118–138 (LTMWLTIATFVGYAVIYTLLL), 146–166 (IVIGGASGAMPPALGWAAVTG), 172–192 (AWILVLIIFVWTPPHFWVLAL), 217–237 (LHILLYTVILFAVTLMPFISG), 239–259 (SGAVYLTSAVLLGAVFLAYAW), and 278–298 (IVYLSLLFAALLVDHYARPLL).

This sequence belongs to the UbiA prenyltransferase family. Protoheme IX farnesyltransferase subfamily.

It localises to the cell inner membrane. The catalysed reaction is heme b + (2E,6E)-farnesyl diphosphate + H2O = Fe(II)-heme o + diphosphate. Its pathway is porphyrin-containing compound metabolism; heme O biosynthesis; heme O from protoheme: step 1/1. In terms of biological role, converts heme B (protoheme IX) to heme O by substitution of the vinyl group on carbon 2 of heme B porphyrin ring with a hydroxyethyl farnesyl side group. The chain is Protoheme IX farnesyltransferase from Burkholderia vietnamiensis (strain G4 / LMG 22486) (Burkholderia cepacia (strain R1808)).